Here is a 533-residue protein sequence, read N- to C-terminus: MNLGHWNFLLALISLQTFFNASAQISTVNNSSKGSNNSNIFHEDTFNSTSIDVLDASIHSTLVVPQTYSTEAATISGARFATSVPVQSPVDNPLDPADCSQREKYRKQPVATPSSRLRKCCPHGENLNIYRENQSDSMCDNGLLSFEPTIISAVLFDNCIEDLEVETTLDYDIGNPCNSSLLYDDKDDVFFVLQDGSLLIIDKFGNESYTVKEHYCLDIDKSGHLFAFTCVTQVEEQIAFAKVVFVAVLMLISMPCLLLVSYLHMTLRLLRNLHGLSLSLMSLCLASGYFVHSVVHIYGIPNQGFIGYVIQFCILSYFFWYLCICFNVLLNVWYKLPCCIQCSKSWATFNFACYAVFAFSGPATIVALTVQKGLPGMPSYFLQGLTESIRDSQRYFIPPVSTILFLSFLLNIISFFGFQRISGYAKAEKNIQERKCLFDQQKYEDVKKDAKCVSLLGIIMVVSWLLEIITFYSGSNSNYLILCDMVNGLQGVWVLLIFLVVRRRRTIILRWWYDRGSHEIEGTELQALSNSPT.

The N-terminal stretch at 1 to 23 (MNLGHWNFLLALISLQTFFNASA) is a signal peptide. 5 N-linked (GlcNAc...) asparagine glycosylation sites follow: N20, N29, N30, N36, and N47. At 24-242 (QISTVNNSSK…QVEEQIAFAK (219 aa)) the chain is on the extracellular side. Residues 86–108 (VQSPVDNPLDPADCSQREKYRKQ) form a disordered region. C120 and C216 are disulfide-bonded. 3 N-linked (GlcNAc...) asparagine glycosylation sites follow: N133, N178, and N206. A helical membrane pass occupies residues 243–263 (VVFVAVLMLISMPCLLLVSYL). At 264-279 (HMTLRLLRNLHGLSLS) the chain is on the cytoplasmic side. The chain crosses the membrane as a helical span at residues 280–300 (LMSLCLASGYFVHSVVHIYGI). The Extracellular segment spans residues 301–303 (PNQ). The helical transmembrane segment at 304-324 (GFIGYVIQFCILSYFFWYLCI) threads the bilayer. Over 325 to 347 (CFNVLLNVWYKLPCCIQCSKSWA) the chain is Cytoplasmic. The chain crosses the membrane as a helical span at residues 348 to 368 (TFNFACYAVFAFSGPATIVAL). Residues 369–395 (TVQKGLPGMPSYFLQGLTESIRDSQRY) are Extracellular-facing. The helical transmembrane segment at 396 to 416 (FIPPVSTILFLSFLLNIISFF) threads the bilayer. At 417–451 (GFQRISGYAKAEKNIQERKCLFDQQKYEDVKKDAK) the chain is on the cytoplasmic side. A helical transmembrane segment spans residues 452 to 472 (CVSLLGIIMVVSWLLEIITFY). Residues 473 to 480 (SGSNSNYL) lie on the Extracellular side of the membrane. The helical transmembrane segment at 481 to 501 (ILCDMVNGLQGVWVLLIFLVV) threads the bilayer. Topologically, residues 502–533 (RRRRTIILRWWYDRGSHEIEGTELQALSNSPT) are cytoplasmic.

It belongs to the G-protein coupled receptor 2 family. Mth subfamily.

The protein resides in the cell membrane. In Drosophila melanogaster (Fruit fly), this protein is Probable G-protein coupled receptor Mth-like 14 (mthl14).